The sequence spans 231 residues: Heptaprenylglyceryl phosphate synthase (231 aa).

Lys12 provides a ligand contact to sn-glycerol 1-phosphate. Mg(2+) contacts are provided by Asp14 and Thr40. Sn-glycerol 1-phosphate-binding positions include 159–164 (YLEYSG), Gly189, and 209–210 (GN).

It belongs to the GGGP/HepGP synthase family. Group I subfamily. In terms of assembly, homodimer. Requires Mg(2+) as cofactor.

The enzyme catalyses sn-glycerol 1-phosphate + all-trans-heptaprenyl diphosphate = 3-heptaprenyl-sn-glycero-1-phosphate + diphosphate. Its pathway is membrane lipid metabolism; glycerophospholipid metabolism. Prenyltransferase that catalyzes in vivo the transfer of the heptaprenyl moiety of heptaprenyl pyrophosphate (HepPP; 35 carbon atoms) to the C3 hydroxyl of sn-glycerol-1-phosphate (G1P), producing heptaprenylglyceryl phosphate (HepGP). This reaction is an ether-bond-formation step in the biosynthesis of archaea-type G1P-based membrane lipids found in Bacillales. The chain is Heptaprenylglyceryl phosphate synthase from Staphylococcus haemolyticus (strain JCSC1435).